Reading from the N-terminus, the 444-residue chain is Sensor protein CiaH (444 aa).

Transmembrane regions (helical) follow at residues 21–41 (FGVFTLIFSTMTLIILQVMHS) and 183–203 (LIVVVMASFWILSLLASLYLA). The Histidine kinase domain maps to 223-438 (NASHELRTPL…IFEVKIAIQT (216 aa)). Position 226 is a phosphohistidine; by autocatalysis (His226).

It is found in the cell membrane. It carries out the reaction ATP + protein L-histidine = ADP + protein N-phospho-L-histidine.. Its function is as follows. Member of the two-component regulatory system CiaH/CiaR. Involved in early steps of competence regulation and in penicillin susceptibility. Probably phosphorylates CiaR. The sequence is that of Sensor protein CiaH (ciaH) from Streptococcus pneumoniae serotype 4 (strain ATCC BAA-334 / TIGR4).